The sequence spans 414 residues: Capsid protein (414 aa).

Residues 1 to 14 show a composition bias toward polar residues; it reads MTSNGSQPQASTPM. Disordered stretches follow at residues 1 to 60, 94 to 127, and 148 to 212; these read MTSN…APTA, AQNE…ASMN, and YPTF…NTGG. Composition is skewed to low complexity over residues 15-27 and 38-60; these read VSAE…ASVP and PAAA…APTA. Composition is skewed to polar residues over residues 113-127, 153-166, and 185-197; these read LPSS…ASMN, GSGS…QRIF, and QATS…TPFT.

Its subcellular location is the virion. The sequence is that of Capsid protein from Crataegus (hawthorn).